A 215-amino-acid chain; its full sequence is Small ribosomal subunit protein uS3 (215 aa).

Residues 39–107 (VRQYLQKKLA…PVHINIEEIR (69 aa)) form the KH type-2 domain.

It belongs to the universal ribosomal protein uS3 family. In terms of assembly, part of the 30S ribosomal subunit. Forms a tight complex with proteins S10 and S14.

Functionally, binds the lower part of the 30S subunit head. Binds mRNA in the 70S ribosome, positioning it for translation. The chain is Small ribosomal subunit protein uS3 from Nitrosomonas europaea (strain ATCC 19718 / CIP 103999 / KCTC 2705 / NBRC 14298).